The chain runs to 111 residues: UPF0145 protein BMA10229_A0446 (111 aa).

Belongs to the UPF0145 family.

This Burkholderia mallei (strain NCTC 10229) protein is UPF0145 protein BMA10229_A0446.